Consider the following 190-residue polypeptide: Elongation factor P-like protein (190 aa).

The protein belongs to the elongation factor P family.

The protein is Elongation factor P-like protein of Pectobacterium carotovorum subsp. carotovorum (strain PC1).